The primary structure comprises 149 residues: SsrA-binding protein (149 aa).

The interval 121–149 (GKKQHDKRADELDKDSKREAQRAMKERQR) is disordered. Over residues 127–149 (KRADELDKDSKREAQRAMKERQR) the composition is skewed to basic and acidic residues.

Belongs to the SmpB family.

It localises to the cytoplasm. In terms of biological role, required for rescue of stalled ribosomes mediated by trans-translation. Binds to transfer-messenger RNA (tmRNA), required for stable association of tmRNA with ribosomes. tmRNA and SmpB together mimic tRNA shape, replacing the anticodon stem-loop with SmpB. tmRNA is encoded by the ssrA gene; the 2 termini fold to resemble tRNA(Ala) and it encodes a 'tag peptide', a short internal open reading frame. During trans-translation Ala-aminoacylated tmRNA acts like a tRNA, entering the A-site of stalled ribosomes, displacing the stalled mRNA. The ribosome then switches to translate the ORF on the tmRNA; the nascent peptide is terminated with the 'tag peptide' encoded by the tmRNA and targeted for degradation. The ribosome is freed to recommence translation, which seems to be the essential function of trans-translation. The polypeptide is SsrA-binding protein (Dechloromonas aromatica (strain RCB)).